The chain runs to 742 residues: Photosystem I P700 chlorophyll a apoprotein A2 2 (742 aa).

A run of 8 helical transmembrane segments spans residues 46 to 69, 135 to 158, 175 to 199, 273 to 291, 334 to 357, 373 to 399, 421 to 443, and 524 to 542; these read IFAT…FHVA, LYQG…LHLQ, LNHH…HVAI, MAHH…GHMY, LHFQ…QHMY, AALY…IFWV, AIIS…LYVH, and FLVH…LICV. [4Fe-4S] cluster contacts are provided by C566 and C575. 2 helical membrane-spanning segments follow: residues 583 to 604 and 651 to 673; these read SFYL…YWHW and LSVW…MFLI. Residues H662, M670, and Y678 each coordinate chlorophyll a. A phylloquinone-binding site is contributed by W679. The helical transmembrane segment at 715–735 threads the bilayer; it reads LVGLAHFTVGYILTYAAFLIA.

This sequence belongs to the PsaA/PsaB family. The PsaA/B heterodimer binds the P700 chlorophyll special pair and subsequent electron acceptors. PSI consists of a core antenna complex that captures photons, and an electron transfer chain that converts photonic excitation into a charge separation. The cyanobacterial PSI reaction center is composed of one copy each of PsaA,B,C,D,E,F,I,J,K,L,M and X, and forms trimeric complexes. It depends on PSI electron transfer chain: 5 chlorophyll a, 1 chlorophyll a', 2 phylloquinones and 3 4Fe-4S clusters. PSI core antenna: 90 chlorophyll a, 22 carotenoids, 3 phospholipids and 1 galactolipid. P700 is a chlorophyll a/chlorophyll a' dimer, A0 is one or more chlorophyll a, A1 is one or both phylloquinones and FX is a shared 4Fe-4S iron-sulfur center. as a cofactor.

It localises to the cellular thylakoid membrane. It carries out the reaction reduced [plastocyanin] + hnu + oxidized [2Fe-2S]-[ferredoxin] = oxidized [plastocyanin] + reduced [2Fe-2S]-[ferredoxin]. PsaA and PsaB bind P700, the primary electron donor of photosystem I (PSI), as well as the electron acceptors A0, A1 and FX. PSI is a plastocyanin/cytochrome c6-ferredoxin oxidoreductase, converting photonic excitation into a charge separation, which transfers an electron from the donor P700 chlorophyll pair to the spectroscopically characterized acceptors A0, A1, FX, FA and FB in turn. Oxidized P700 is reduced on the lumenal side of the thylakoid membrane by plastocyanin or cytochrome c6. This chain is Photosystem I P700 chlorophyll a apoprotein A2 2, found in Trichormus variabilis (strain ATCC 29413 / PCC 7937) (Anabaena variabilis).